The sequence spans 243 residues: MASLRSAHPADRIIVALDGMAPEQALAFAAQVEGLRWVKVGLELFVQAGPEVVAQLREQGLRVFLDLKFHDIPATMAGACRRAAALGAELITVHACAGSEALKAAQAAAVEGAQGAGQPAPTLLAVTVLTSWEEQRLQRELAITQGIAERVPALAQLSATAGIGGCVCSPLEAAALRAQHPEPFALVTPGIRPKGAAVGDQARVMGPAEAIAAGASQLVIGRPITKAEDPSAAFAACCGELLG.

Substrate is bound by residues D18, K39, 66–75 (DLKFHDIPAT), T130, R192, Q201, G221, and R222. K68 acts as the Proton donor in catalysis.

This sequence belongs to the OMP decarboxylase family. Type 1 subfamily. Homodimer.

The catalysed reaction is orotidine 5'-phosphate + H(+) = UMP + CO2. The protein operates within pyrimidine metabolism; UMP biosynthesis via de novo pathway; UMP from orotate: step 2/2. Catalyzes the decarboxylation of orotidine 5'-monophosphate (OMP) to uridine 5'-monophosphate (UMP). The protein is Orotidine 5'-phosphate decarboxylase of Synechococcus sp. (strain WH7803).